Here is a 253-residue protein sequence, read N- to C-terminus: HVVVGTPGRVFDMLRRQSLRPDNIKMFVLDEADEMLSRGFKDQIYDIFQLLPPKIQVGIFSATMPPEALEITRKFMNKPVRILVKRDELTLEGIKQFYVNVDKEEWKLETLCDLYETLAITQSVIFVNTRRKVDWLTDKMRGRDHTVSATHGDMDQNTRDIIMREFRSGSSRVLITTDLLARGIDVQQVSLVINYDLPTQPENYLHRIGRSGRFGRKGVSINFVTKDDERMLFDIQKFYNVVIEELPANVADL.

A Helicase ATP-binding domain is found at 1-82 (HVVVGTPGRV…RKFMNKPVRI (82 aa)). The DEAD box signature appears at 30–33 (DEAD). The region spanning 93–253 (GIKQFYVNVD…EELPANVADL (161 aa)) is the Helicase C-terminal domain.

It belongs to the DEAD box helicase family. eIF4A subfamily. In terms of assembly, eIF4F is a multi-subunit complex, the composition of which varies with external and internal environmental conditions. It is composed of at least EIF4A, EIF4E and EIF4G.

It carries out the reaction ATP + H2O = ADP + phosphate + H(+). In terms of biological role, ATP-dependent RNA helicase which is a subunit of the eIF4F complex involved in cap recognition and is required for mRNA binding to ribosome. In the current model of translation initiation, eIF4A unwinds RNA secondary structures in the 5'-UTR of mRNAs which is necessary to allow efficient binding of the small ribosomal subunit, and subsequent scanning for the initiator codon. This chain is Eukaryotic initiation factor 4A-6, found in Nicotiana tabacum (Common tobacco).